We begin with the raw amino-acid sequence, 283 residues long: Pantothenate synthetase (283 aa).

Residue 30 to 37 (MGALHEGH) coordinates ATP. Catalysis depends on H37, which acts as the Proton donor. Q61 serves as a coordination point for (R)-pantoate. Beta-alanine is bound at residue Q61. 149–152 (GEKD) is an ATP binding site. Residue Q155 coordinates (R)-pantoate. Residues L178 and 186–189 (RSSR) contribute to the ATP site.

The protein belongs to the pantothenate synthetase family. In terms of assembly, homodimer.

It localises to the cytoplasm. The catalysed reaction is (R)-pantoate + beta-alanine + ATP = (R)-pantothenate + AMP + diphosphate + H(+). Its pathway is cofactor biosynthesis; (R)-pantothenate biosynthesis; (R)-pantothenate from (R)-pantoate and beta-alanine: step 1/1. Its function is as follows. Catalyzes the condensation of pantoate with beta-alanine in an ATP-dependent reaction via a pantoyl-adenylate intermediate. The protein is Pantothenate synthetase of Christiangramia forsetii (strain DSM 17595 / CGMCC 1.15422 / KT0803) (Gramella forsetii).